The primary structure comprises 596 residues: Signal peptide peptidase-like 2B (596 aa).

A signal peptide spans 1–21 (MAARWAQFLLFSLLSLPQVYC). Residues 22-170 (EYGMVHVLSE…APNEPVLDYN (149 aa)) are Lumenal-facing. Positions 53-147 (HDLGKASLLQ…LLSYSDMLDI (95 aa)) constitute a PA domain. Asn93 carries N-linked (GlcNAc...) asparagine glycosylation. A helical transmembrane segment spans residues 171–191 (MVIIFVMAVGTVAIGGYWAGS). The Cytoplasmic portion of the chain corresponds to 192–219 (RDVKERYMKHKRDDGAEKHEDETVDVTP). The helical transmembrane segment at 220–240 (IMICVFVVMCCSMLVLLYFFY) threads the bilayer. Over 241–242 (DH) the chain is Lumenal. The helical transmembrane segment at 243 to 263 (LVYVIIGIFCLAASIGLYSCL) threads the bilayer. Topologically, residues 264–289 (SPFVRRFPLGKCRIPDNNLPYFHKRP) are cytoplasmic. Residues 290–310 (QVRILLLAVFCISVSVVWGVF) traverse the membrane as a helical segment. The Lumenal segment spans residues 311 to 315 (RNEDQ). Residues 316–336 (WAWVLQDALGIAFCLYMLKTI) traverse the membrane as a helical segment. Topologically, residues 337 to 344 (RLPTFKGC) are cytoplasmic. Residues 345 to 365 (TLLLLVLFVYDVFFVFITPFL) form a helical membrane-spanning segment. The active site involves Asp355. Over 366–408 (TKTGESIMVEVAAGPSDSATHEKLPMVLKVPRLNSSPLALCDR) the chain is Lumenal. Residues 409–429 (PFSLLGFGDILVPGLLVAYCH) traverse the membrane as a helical segment. The active site involves Asp417. The Cytoplasmic segment spans residues 430-441 (RFDIQVQSSRVY). A helical transmembrane segment spans residues 442-462 (FVACTIAYGIGLLVTFVALAL). Residues 463-466 (MQMG) are Lumenal-facing. Residues 467–487 (QPALLYLVPCTLITSFSVALW) traverse the membrane as a helical segment. The PAL signature appears at 468-470 (PAL). Over 488–596 (RKELAMFWTG…SLNLEQKQLE (109 aa)) the chain is Cytoplasmic. The interval 543-596 (KELHSPTLAAEEPADNDTKTEQSEVSIAQSEEAAGHNKDDLESKSLNLEQKQLE) is disordered. The span at 575–585 (AAGHNKDDLES) shows a compositional bias: basic and acidic residues. The segment covering 586 to 596 (KSLNLEQKQLE) has biased composition (polar residues).

This sequence belongs to the peptidase A22B family.

It localises to the cell membrane. The protein resides in the golgi apparatus membrane. Its subcellular location is the lysosome membrane. It is found in the endosome membrane. The protein localises to the membrane. Its function is as follows. Intramembrane-cleaving aspartic protease (I-CLiP) that cleaves type II membrane signal peptides in the hydrophobic plane of the membrane. This Gallus gallus (Chicken) protein is Signal peptide peptidase-like 2B.